Reading from the N-terminus, the 470-residue chain is Nuclear receptor subfamily 0 group B member 1 (470 aa).

Repeat copies occupy residues 1 to 67 (MAGE…YRCC), 68 to 133 (FCGK…YRCC), and 134 to 200 (FCGE…YRCC). The segment at 1 to 253 (MAGENHQWQG…RPVALKSPQV (253 aa)) is 4 X 67 AA tandem repeats. 3 short sequence motifs (LXXLL motif) span residues 13 to 17 (LYNML), 80 to 84 (LYSML), and 146 to 150 (LYSLL). One copy of the 4; truncated repeat lies at 201–253 (FCGEDHPQQGSTLYCMPTSTNQAQAAPEERPRAPWWDTSSGALRPVALKSPQV). An NR LBD domain is found at 205–469 (DHPQQGSTLY…DMMLEMLCTK (265 aa)). The AF-2 motif motif lies at 461–466 (MMLEML).

It belongs to the nuclear hormone receptor family. NR0 subfamily. As to quaternary structure, homodimer. Interacts with NR5A1, NR5A2, NR0B2 and with COPS2. Interacts with ESRRB; represses ESRRB activity at the GATA6 promoter.

It localises to the nucleus. The protein localises to the cytoplasm. Nuclear receptor that lacks a DNA-binding domain and acts as a corepressor that inhibits the transcriptional activity of other nuclear receptors through heterodimeric interactions. Component of a cascade required for the development of the hypothalamic-pituitary-adrenal-gonadal axis. May also have a role in the development of the embryo and in the maintenance of embryonic stem cell pluripotency. The sequence is that of Nuclear receptor subfamily 0 group B member 1 (NR0B1) from Pan troglodytes (Chimpanzee).